A 484-amino-acid polypeptide reads, in one-letter code: MSTSFDHSVILSPLDHIAPQAYVSYLLSFQTANSTHCLSLLEAGITRLTKVLPLLLGHIVVNPELDGKYNIQSVQIPCTKEDRTILVHKHHPFPMESALGGVQSGMSMLETSDSKQHLCPLPPLIPSTERQPVIRFQANIFTDAIVLAMTFSHIVFDGTGAAKILALLGRCCRDPSVTPLPLIIDEQDRAQSAIFAGLADTSPAQDHTAELGPAPAIHPVPLDAASLRTCRFEFNSERILQLKYQCSQVLKNACMFQPNSASIPVADLPPFLSSNDVLTSALADAIQRVKSQSKTYDCLDLCMAVNMRGRIELSAAREFLGNMACNLRLKTPGPEYTGPEQCLSCRKTHDCPIQTDQLRFLTDLACKVRNKVRNMDRKYFQSCMTYIANQKDWSQTGMIFTDLAFSSWRHLDIYGLDFGDSFGIVHNFDLSFGLIEGDVIFLPKRLTCDQKEAGWDVHITLPAKDLEALVKDDLIRWLMGRDGE.

This sequence belongs to the fumigaclavine B O-acetyltransferase family. As to quaternary structure, monomer.

It catalyses the reaction fumigaclavine B + acetyl-CoA = fumigaclavine A + CoA. The protein operates within alkaloid biosynthesis; ergot alkaloid biosynthesis. Fumigaclavine B O-acetyltransferase; part of the gene cluster that mediates the biosynthesis of isofumigaclavines, fungal ergot alkaloids. The tryptophan dimethylallyltransferase ifgA catalyzes the first step of ergot alkaloid biosynthesis by condensing dimethylallyl diphosphate (DMAP) and tryptophan to form 4-dimethylallyl-L-tryptophan. The second step is catalyzed by the methyltransferase ifgB that methylates 4-dimethylallyl-L-tryptophan in the presence of S-adenosyl-L-methionine, resulting in the formation of N-methyl-dimethylallyl-L-tryptophan. The catalase ifgD and the FAD-dependent oxidoreductase ifgC then transform N-methyl-dimethylallyl-L-tryptophan to chanoclavine-I which is further oxidized by ifgE in the presence of NAD(+), resulting in the formation of chanoclavine-I aldehyde. The chanoclavine-I aldehyde reductases ifgG and/or fgaOx3 reduce chanoclavine-I aldehyde to dihydrochanoclavine-I aldehyde that spontaneously dehydrates to form 6,8-dimethyl-6,7-didehydroergoline. The festuclavine dehydrogenases ifgF1 and/or ifgF2 then catalyze the reduction of 6,8-dimethyl-6,7-didehydroergoline to form festuclavine. Hydrolysis of festuclavine by a yet undetermined cytochrome P450 monooxygenase (called ifgH) then leads to the formation of isofumigaclavine B which is in turn acetylated by ifgI to isofumigaclavine A. Penicillium roqueforti has interestingly at least two sets of genes for the consumption of chanoclavine-I aldehyde on three different loci, the OYEs ifgG/fgaOx3 and the festuclavine synthase homologs ifgF1/ifgF2. The reason for the duplication of these genes is unclear, probably to ensure the conversion of chanoclavine-I aldehyde by differential gene expression under various environmental conditions. The chain is Fumigaclavine B O-acetyltransferase ifgI from Penicillium roqueforti (strain FM164).